We begin with the raw amino-acid sequence, 389 residues long: MIKNTIKKLIEHSIYTTFKLLSKLPNKNLIYFESFHGKQYSDNPKALYEYLTEHSDAQLIWGVKKGYEHIFQQHNVPYVTKFSMKWFLAMPRAKAWMINTRTPDWLYKSPRTTYLQTWHGTPLKKIGLDISNVKMLGTNTQNYQDGFKKESQRWDYLVSPNPYSTSIFQNAFHVSRDKILETGYPRNDKLSHKRNDTEYINGIKTRLNIPLDKKVIMYAPTWRDDEAIREGSYQFNVNFDIEALRQALDDDYVILLRMHYLVVTRIDEHDDFVKDVSDYEDISDLYLISDALVTDYSSVMFDFGVLKRPQIFYAYDLDKYGDELRGFYMDYKKELPGPIVENQTALIDALKQIDETANEYIEARTVFYQKFCSLEDGQASQRICQTIFK.

The protein belongs to the CDP-glycerol glycerophosphotransferase family.

It is found in the cell membrane. The enzyme catalyses 4-O-[(2R)-glycerylphospho]-N-acetyl-beta-D-mannosaminyl-(1-&gt;4)-N-acetyl-alpha-D-glucosaminyl di-trans,octa-cis-undecaprenyl diphosphate + CDP-glycerol = 4-O-[di(2R)-glycerylphospho]-N-acetyl-beta-D-mannosaminyl-(1-&gt;4)-N-acetyl-alpha-D-glucosaminyl di-trans,octa-cis-undecaprenyl diphosphate + CMP + H(+). The protein operates within cell wall biogenesis; poly(ribitol phosphate) teichoic acid biosynthesis. In terms of biological role, catalyzes the addition of a second glycerol phosphate unit from CDP-glycerol to the prenolpyrophosphate-linked disaccharide, to complete the linkage unit. This chain is Teichoic acid glycerol-phosphate transferase (tarF), found in Staphylococcus aureus (strain NCTC 8325 / PS 47).